A 405-amino-acid chain; its full sequence is Type III polyketide synthase 10 (405 aa).

A compositionally biased stretch (polar residues) spans 1 to 18 (MVSTNAGGIASKQASSMA). A disordered region spans residues 1-20 (MVSTNAGGIASKQASSMAPN). Cys170 (nucleophile) is an active-site residue.

This sequence belongs to the thiolase-like superfamily. Chalcone/stilbene synthases family. As to quaternary structure, interacts with STS1. Expressed in adult flowers.

The protein resides in the endoplasmic reticulum. Plant type III polyketide synthases (PKSs) that catalyzes the condensation of fatty acyl-CoA with malonyl-CoA to generate triketide and tetraketide alpha-pyrones, the main components of pollen exine and potential sporopollenin precursors. May be involved in the synthesis of sporopollenin precursors in tapetal cells to regulate pollen wall formation. Required for exine and Ubisch body formation in anthers. Does not possess chalcone synthase (CHS) activity in vitro with the substrates 4-coumaroyl-CoA and malonyl-CoA. In Oryza sativa subsp. japonica (Rice), this protein is Type III polyketide synthase 10.